The primary structure comprises 658 residues: Protein CFAP20DC (658 aa).

Disordered stretches follow at residues 312–522 and 589–634; these read QQGE…EEEY and PVNQ…LDSS. Polar residues predominate over residues 319–328; the sequence is SHPVKQTTPL. Residues 339-349 show a composition bias toward basic and acidic residues; sequence PPRDPSADKGS. Low complexity-rich tracts occupy residues 351–363 and 417–434; these read RRGL…SGSR and SSGP…LLLD. Residues 494–506 are compositionally biased toward basic and acidic residues; that stretch reads DPKEDSRVTKGDT. Residues 507–521 are compositionally biased toward acidic residues; the sequence is ELEDDFYGSDSSEEE. Residues 625 to 634 show a composition bias toward polar residues; sequence QPLEQSLDSS.

This chain is Protein CFAP20DC, found in Rattus norvegicus (Rat).